Reading from the N-terminus, the 596-residue chain is Protein FlbA (596 aa).

4 TPR repeats span residues 91-124 (GLAW…LPDH), 159-192 (VEGA…NPEA), 193-226 (AVLW…APDF), and 228-260 (KAYH…PGSP).

The chain is Protein FlbA (flbA) from Caulobacter vibrioides (strain ATCC 19089 / CIP 103742 / CB 15) (Caulobacter crescentus).